The sequence spans 67 residues: MMHIVMIGVNEKLSLVKLKNLGGNPIGVINAVFDTALQTMKQYKIDACLLRVLKSSKCSLQVPRVVL.

This is an uncharacterized protein from Escherichia coli (Bacteriophage T4).